Here is a 481-residue protein sequence, read N- to C-terminus: Trigger factor (481 aa).

In terms of domain architecture, PPIase FKBP-type spans 174–261 (GDIAVVSFKG…LKDLKEKELP (88 aa)). Residues 435 to 481 (VKEKTTKASQASKTTKAKKTTTKTTKATKTATKTTKATKTQNKKEKK) are disordered. Low complexity predominate over residues 456 to 474 (TKTTKATKTATKTTKATKT).

It belongs to the FKBP-type PPIase family. Tig subfamily.

It localises to the cytoplasm. The enzyme catalyses [protein]-peptidylproline (omega=180) = [protein]-peptidylproline (omega=0). Its function is as follows. Involved in protein export. Acts as a chaperone by maintaining the newly synthesized protein in an open conformation. Functions as a peptidyl-prolyl cis-trans isomerase. The polypeptide is Trigger factor (Prochlorococcus marinus (strain MIT 9312)).